The sequence spans 249 residues: tRNA (guanine-N(1)-)-methyltransferase (249 aa).

S-adenosyl-L-methionine is bound by residues glycine 121 and 141-146 (LGDFVL).

This sequence belongs to the RNA methyltransferase TrmD family. As to quaternary structure, homodimer.

The protein localises to the cytoplasm. The enzyme catalyses guanosine(37) in tRNA + S-adenosyl-L-methionine = N(1)-methylguanosine(37) in tRNA + S-adenosyl-L-homocysteine + H(+). Functionally, specifically methylates guanosine-37 in various tRNAs. In Cereibacter sphaeroides (strain ATCC 17023 / DSM 158 / JCM 6121 / CCUG 31486 / LMG 2827 / NBRC 12203 / NCIMB 8253 / ATH 2.4.1.) (Rhodobacter sphaeroides), this protein is tRNA (guanine-N(1)-)-methyltransferase.